The chain runs to 228 residues: uncharacterized protein (228 aa).

Disordered regions lie at residues 1–62 and 160–228; these read MQRP…VGRF and SPRP…LSGV. A compositionally biased stretch (low complexity) spans 13-33; the sequence is AASTRAPPRPSAPQQGRRQPS. Residues 167–176 are compositionally biased toward polar residues; it reads RGQQVTQDGP.

This is an uncharacterized protein from Homo sapiens (Human).